Consider the following 406-residue polypeptide: MDIQRFLKFYKVGWKTYRDPLMEASHSSIYYWREQMKAMALFTTTEERLLPYRSKWHTLVYIQMVIFFASMSFGLTESMGDHVQMGRDLAFILGAFFIIFKTYYFCWYGDELDQVISDLDALHPWAQKGPNPVEYQTGKRWYFVMAFFLATSWSFFLCILLLLLITSPMWVHQQNLPFHAAFPFQWHEKSLHPISHAIIYLFQSYFAVYCLTWLLCIEGLSICIYAEITFGIEVLCLELRQIHRHNYGLQELRMETNRLVKLHQKIVEILDRTNDVFHGTLIMQMGVNFSLVSLSVLEAVEARKDPKVVAQFAVLMLLALGHLSMWSYCGDQLSQKSLQISEAAYEAYDPTKGSKDVYRDLCVIIRRGQDPLIMRASPFPSFNLINYSAILNQCYGILTFLLKTLD.

At 1 to 55 (MDIQRFLKFYKVGWKTYRDPLMEASHSSIYYWREQMKAMALFTTTEERLLPYRSK) the chain is on the cytoplasmic side. The helical transmembrane segment at 56–76 (WHTLVYIQMVIFFASMSFGLT) threads the bilayer. The Extracellular segment spans residues 77-88 (ESMGDHVQMGRD). A helical transmembrane segment spans residues 89 to 109 (LAFILGAFFIIFKTYYFCWYG). The Cytoplasmic segment spans residues 110 to 144 (DELDQVISDLDALHPWAQKGPNPVEYQTGKRWYFV). A helical membrane pass occupies residues 145 to 165 (MAFFLATSWSFFLCILLLLLI). Topologically, residues 166–218 (TSPMWVHQQNLPFHAAFPFQWHEKSLHPISHAIIYLFQSYFAVYCLTWLLCIE) are extracellular. A helical membrane pass occupies residues 219-239 (GLSICIYAEITFGIEVLCLEL). The Cytoplasmic segment spans residues 240-275 (RQIHRHNYGLQELRMETNRLVKLHQKIVEILDRTND). Residues 276-296 (VFHGTLIMQMGVNFSLVSLSV) form a helical membrane-spanning segment. Residues 297 to 307 (LEAVEARKDPK) are Extracellular-facing. Residues 308-328 (VVAQFAVLMLLALGHLSMWSY) traverse the membrane as a helical segment. At 329–381 (CGDQLSQKSLQISEAAYEAYDPTKGSKDVYRDLCVIIRRGQDPLIMRASPFPS) the chain is on the cytoplasmic side. Residues 382–402 (FNLINYSAILNQCYGILTFLL) form a helical membrane-spanning segment. The Extracellular segment spans residues 403-406 (KTLD).

Belongs to the insect chemoreceptor superfamily. Heteromeric odorant receptor channel (TC 1.A.69) family. Or49a subfamily. In terms of assembly, interacts with Orco. Complexes exist early in the endomembrane system in olfactory sensory neurons (OSNs), coupling these complexes to the conserved ciliary trafficking pathway.

It localises to the cell membrane. Odorant receptor which mediates acceptance or avoidance behavior, depending on its substrates. The odorant receptor repertoire encodes a large collection of odor stimuli that vary widely in identity, intensity, and duration. May form a complex with Orco to form odorant-sensing units, providing sensitive and prolonged odorant signaling and calcium permeability. This Drosophila melanogaster (Fruit fly) protein is Putative odorant receptor 65b (Or65b).